The sequence spans 265 residues: Small ribosomal subunit protein eS4 (265 aa).

In terms of domain architecture, S4 RNA-binding spans 42–104 (LPLILIIRNR…TNENYRLLYD (63 aa)).

It belongs to the eukaryotic ribosomal protein eS4 family.

The protein localises to the cytoplasm. This chain is Small ribosomal subunit protein eS4 (RPS4), found in Zea mays (Maize).